Here is a 403-residue protein sequence, read N- to C-terminus: Acetate kinase (403 aa).

Asn7 is a Mg(2+) binding site. ATP is bound at residue Lys14. Residue Arg90 participates in substrate binding. Residue Asp147 is the Proton donor/acceptor of the active site. ATP is bound by residues 207–211, 283–285, and 331–335; these read HIGNG, DMR, and GVGEN. Position 386 (Glu386) interacts with Mg(2+).

It belongs to the acetokinase family. In terms of assembly, homodimer. Mg(2+) is required as a cofactor. The cofactor is Mn(2+).

It localises to the cytoplasm. The enzyme catalyses acetate + ATP = acetyl phosphate + ADP. It functions in the pathway metabolic intermediate biosynthesis; acetyl-CoA biosynthesis; acetyl-CoA from acetate: step 1/2. Catalyzes the formation of acetyl phosphate from acetate and ATP. Can also catalyze the reverse reaction. The protein is Acetate kinase of Thermotoga petrophila (strain ATCC BAA-488 / DSM 13995 / JCM 10881 / RKU-1).